We begin with the raw amino-acid sequence, 295 residues long: Acetylglutamate kinase (295 aa).

Substrate is bound by residues 66 to 67, Arg-88, and Asn-193; that span reads GG.

The protein belongs to the acetylglutamate kinase family. ArgB subfamily.

The protein resides in the cytoplasm. It carries out the reaction N-acetyl-L-glutamate + ATP = N-acetyl-L-glutamyl 5-phosphate + ADP. It participates in amino-acid biosynthesis; L-arginine biosynthesis; N(2)-acetyl-L-ornithine from L-glutamate: step 2/4. Functionally, catalyzes the ATP-dependent phosphorylation of N-acetyl-L-glutamate. This Bradyrhizobium diazoefficiens (strain JCM 10833 / BCRC 13528 / IAM 13628 / NBRC 14792 / USDA 110) protein is Acetylglutamate kinase.